Consider the following 1118-residue polypeptide: uncharacterized protein (1118 aa).

3 disordered regions span residues 1–69 (MESG…NGED), 1044–1071 (PKSVSSSSSLGRKRGRKRENSEEEEKID), and 1090–1118 (IRPTVNVEEDQNIKTEIEDSDDLEDSFEL). The segment covering 13–34 (DMVEEDNDEDSFEEPACEDSFD) has biased composition (acidic residues). The span at 35-60 (SQEASSKANEPQNDSFDEPIQSSVSK) shows a compositional bias: polar residues. The segment covering 1107-1118 (EDSDDLEDSFEL) has biased composition (acidic residues).

This is an uncharacterized protein from Caenorhabditis elegans.